Reading from the N-terminus, the 937-residue chain is CAP-Gly domain-containing linker protein 1 homolog (937 aa).

The 43-residue stretch at 39-81 folds into the CAP-Gly domain; that stretch reads GPIHGKDGMFCGIELLEPNGKHDGTFQGVSYFIATPYHGIFAP. Disordered stretches follow at residues 90 to 131 and 264 to 548; these read EELP…VMST and LPND…SRLQ. Positions 268 to 281 are enriched in polar residues; sequence LNANFSNKNSTTTF. Over residues 285-295 the composition is skewed to basic and acidic residues; that stretch reads ETPKVEIRENG. Over residues 296 to 309 the composition is skewed to polar residues; the sequence is NLDNSIETPPQQSP. Basic and acidic residues-rich tracts occupy residues 317-353, 383-396, 409-424, and 463-473; these read HESD…KEEP, IEAE…EIKS, PQKE…ETPR, and AKERVEKEKKI. Residues 492–501 are compositionally biased toward low complexity; the sequence is SSIPSTSSAS. Coiled-coil stretches lie at residues 566-740 and 773-800; these read EDNE…VDEI and QQIE…DLMQ. Disordered stretches follow at residues 819–866 and 916–937; these read MESR…DSMN and PTIK…GLVM. Low complexity predominate over residues 832–844; sequence RSRSSASGSRPIS. The segment covering 845-858 has biased composition (polar residues); it reads MATSNGGDQRLSTS.

The chain is CAP-Gly domain-containing linker protein 1 homolog from Caenorhabditis elegans.